The sequence spans 669 residues: MTKRTSFNPLVIGVTLFFILLLMAMIFIAPEQTQALLNQAKSGIFANFSWFYVLTFSVFLGFLLILSVSSLGNIKLGQDEEEPEFSFLSWLAMLFAAGMGVGLMFFGVAEPLTHYLSDITAGSAEHKQQEALLHTLFHWGIHAWAVYGTIALALAYFGFRYKLPLALRSCFYPLLKDRINGKIGDAIDVMALLATLFGIITTLGFGSSQLGAGLEQIGWISQNSFALQVGVIVVVMCLAVFSAISGVGKGVKILSEINLTLAFCLLLFVLISGPTLYLLSAFSDNIGNYFSNLVQLSFKTYAYEQEHTSWFSGWTVLYWAWWCSWAPFVGLFIARISKGRTIREFIFGVLVIPSLFGILWFTVFGNTAVWLNDGIAAGGLGEFISSPEILLFKFLNYLPLPTITGFVSLLVILLFFITSADSGIYVLNNIASRDKSLASPAWQAIMWGTLMSVVAIVLMQSGGLANLQTMTLIVALPFALLMLVMCFSLWKGLIADKKYFSTKVNPTSIFWSGDKWKSHLEQMMNQTQEKDILRFLKNTALPAMRELRQELTGKYNLSVEINTLFEQEEPALELVIHKESMRDFMYGIKSVGREVSEQLINDENLPHIQHSATYEPYTYFFDGRVGYDVQYMDQDELIADMLKQYERYLSLLDDVGQELMAHEQTELAE.

12 helical membrane-spanning segments follow: residues 9 to 29 (PLVI…IFIA), 48 to 68 (FSWF…ILSV), 87 to 107 (FLSW…MFFG), 139 to 159 (WGIH…YFGF), 186 to 206 (AIDV…LGFG), 224 to 244 (SFAL…FSAI), 259 to 279 (LTLA…LYLL), 314 to 334 (WTVL…LFIA), 345 to 365 (FIFG…TVFG), 397 to 417 (YLPL…LFFI), 444 to 464 (AIMW…SGGL), and 470 to 490 (MTLI…FSLW).

The protein belongs to the BCCT transporter (TC 2.A.15) family.

Its subcellular location is the cell inner membrane. This is an uncharacterized protein from Haemophilus influenzae (strain ATCC 51907 / DSM 11121 / KW20 / Rd).